The chain runs to 150 residues: D-aminoacyl-tRNA deacylase (150 aa).

A Gly-cisPro motif, important for rejection of L-amino acids motif is present at residues 137-138; the sequence is GP.

This sequence belongs to the DTD family. In terms of assembly, homodimer.

It localises to the cytoplasm. It carries out the reaction glycyl-tRNA(Ala) + H2O = tRNA(Ala) + glycine + H(+). The catalysed reaction is a D-aminoacyl-tRNA + H2O = a tRNA + a D-alpha-amino acid + H(+). In terms of biological role, an aminoacyl-tRNA editing enzyme that deacylates mischarged D-aminoacyl-tRNAs. Also deacylates mischarged glycyl-tRNA(Ala), protecting cells against glycine mischarging by AlaRS. Acts via tRNA-based rather than protein-based catalysis; rejects L-amino acids rather than detecting D-amino acids in the active site. By recycling D-aminoacyl-tRNA to D-amino acids and free tRNA molecules, this enzyme counteracts the toxicity associated with the formation of D-aminoacyl-tRNA entities in vivo and helps enforce protein L-homochirality. The polypeptide is D-aminoacyl-tRNA deacylase (Listeria innocua serovar 6a (strain ATCC BAA-680 / CLIP 11262)).